Consider the following 613-residue polypeptide: Kelch-like protein 36 (613 aa).

Residues 45–112 (CDVVLVVEEQ…LYSSELELDG (68 aa)) enclose the BTB domain. Positions 147–249 (YLYLQELASI…PEDILLQRVK (103 aa)) constitute a BACK domain. Kelch repeat units lie at residues 294–343 (CLLF…VLGG), 344–395 (FIFI…SIED), 396–442 (MLVA…IYKD), 444–491 (VYIS…SLGD), 492–544 (SIYS…VWQG), and 545–593 (RIYI…VCAL).

Interacts with CUL3.

Its pathway is protein modification; protein ubiquitination. Its function is as follows. Probable substrate-specific adapter of an E3 ubiquitin-protein ligase complex which mediates the ubiquitination and subsequent proteasomal degradation of target proteins. The polypeptide is Kelch-like protein 36 (Klhl36) (Mus musculus (Mouse)).